The following is a 122-amino-acid chain: Small ribosomal subunit protein uS13 (122 aa).

Positions 94–122 are disordered; it reads GLPVRGQSTQKNARTRKGPRKTVAGKKGK. Basic residues predominate over residues 106–122; that stretch reads ARTRKGPRKTVAGKKGK.

The protein belongs to the universal ribosomal protein uS13 family. Part of the 30S ribosomal subunit. Forms a loose heterodimer with protein S19. Forms two bridges to the 50S subunit in the 70S ribosome.

Functionally, located at the top of the head of the 30S subunit, it contacts several helices of the 16S rRNA. In the 70S ribosome it contacts the 23S rRNA (bridge B1a) and protein L5 of the 50S subunit (bridge B1b), connecting the 2 subunits; these bridges are implicated in subunit movement. Contacts the tRNAs in the A and P-sites. The chain is Small ribosomal subunit protein uS13 from Mycoplasmopsis synoviae (strain 53) (Mycoplasma synoviae).